The sequence spans 449 residues: Chromosomal replication initiator protein DnaA (449 aa).

A domain I, interacts with DnaA modulators region spans residues 1 to 72 (MPNLEELWAY…VEGVYEFAQL (72 aa)). Residues 72–109 (LEVDPVIMTKDELQPAPATDQRPAVEEDDQNLTFKAKT) are domain II. Residues 110–326 (HLNPKYTFDR…GALVRVQAFS (217 aa)) form a domain III, AAA+ region region. Residues Gly154, Gly156, Lys157, and Thr158 each coordinate ATP. Residues 327–449 (TMKNEDITTS…ELRNILKNRG (123 aa)) are domain IV, binds dsDNA.

It belongs to the DnaA family. Oligomerizes as a right-handed, spiral filament on DNA at oriC.

The protein localises to the cytoplasm. Its function is as follows. Plays an essential role in the initiation and regulation of chromosomal replication. ATP-DnaA binds to the origin of replication (oriC) to initiate formation of the DNA replication initiation complex once per cell cycle. Binds the DnaA box (a 9 base pair repeat at the origin) and separates the double-stranded (ds)DNA. Forms a right-handed helical filament on oriC DNA; dsDNA binds to the exterior of the filament while single-stranded (ss)DNA is stabiized in the filament's interior. The ATP-DnaA-oriC complex binds and stabilizes one strand of the AT-rich DNA unwinding element (DUE), permitting loading of DNA polymerase. After initiation quickly degrades to an ADP-DnaA complex that is not apt for DNA replication. Binds acidic phospholipids. This is Chromosomal replication initiator protein DnaA from Lacticaseibacillus casei (strain BL23) (Lactobacillus casei).